A 153-amino-acid chain; its full sequence is Phosphoribosyl-AMP cyclohydrolase (153 aa).

Asp93 contacts Mg(2+). Cys94 lines the Zn(2+) pocket. The Mg(2+) site is built by Asp95 and Asp97. Zn(2+) is bound by residues Cys112 and Cys119.

This sequence belongs to the PRA-CH family. In terms of assembly, homodimer. It depends on Mg(2+) as a cofactor. Zn(2+) is required as a cofactor.

It localises to the cytoplasm. The enzyme catalyses 1-(5-phospho-beta-D-ribosyl)-5'-AMP + H2O = 1-(5-phospho-beta-D-ribosyl)-5-[(5-phospho-beta-D-ribosylamino)methylideneamino]imidazole-4-carboxamide. The protein operates within amino-acid biosynthesis; L-histidine biosynthesis; L-histidine from 5-phospho-alpha-D-ribose 1-diphosphate: step 3/9. In terms of biological role, catalyzes the hydrolysis of the adenine ring of phosphoribosyl-AMP. The polypeptide is Phosphoribosyl-AMP cyclohydrolase (Mesorhizobium japonicum (strain LMG 29417 / CECT 9101 / MAFF 303099) (Mesorhizobium loti (strain MAFF 303099))).